The chain runs to 414 residues: Probable protein phosphatase 2C 80 (414 aa).

Residues 174–411 (SCYLPHPEKE…DDITAVVSYV (238 aa)) form the PPM-type phosphatase domain. Mn(2+)-binding residues include Asp204, Gly205, Asp336, and Asp402.

Belongs to the PP2C family. Mg(2+) is required as a cofactor. The cofactor is Mn(2+).

The catalysed reaction is O-phospho-L-seryl-[protein] + H2O = L-seryl-[protein] + phosphate. The enzyme catalyses O-phospho-L-threonyl-[protein] + H2O = L-threonyl-[protein] + phosphate. The protein is Probable protein phosphatase 2C 80 of Arabidopsis thaliana (Mouse-ear cress).